We begin with the raw amino-acid sequence, 467 residues long: UPF0236 protein TTE0610/TTE0881/TTE1053/TTE2432 (467 aa).

The protein belongs to the UPF0236 family.

This chain is UPF0236 protein TTE0610/TTE0881/TTE1053/TTE2432, found in Caldanaerobacter subterraneus subsp. tengcongensis (strain DSM 15242 / JCM 11007 / NBRC 100824 / MB4) (Thermoanaerobacter tengcongensis).